The sequence spans 215 residues: Interleukin-12 subunit alpha (215 aa).

The signal sequence occupies residues 1–22; it reads MCQSRYLLFLATLALLNHLSLA. 3 cysteine pairs are disulfide-bonded: cysteine 33-cysteine 106, cysteine 60-cysteine 192, and cysteine 81-cysteine 119. A glycan (N-linked (GlcNAc...) asparagine) is linked at asparagine 89.

It belongs to the IL-6 superfamily. Heterodimer with IL12B; disulfide-linked. This heterodimer is known as interleukin IL-12. Heterodimer with EBI3/IL27B; not disulfide-linked. This heterodimer is known as interleukin IL-35. Interacts with NBR1; this interaction promotes IL-12 secretion.

Its subcellular location is the secreted. Heterodimerizes with IL12B to form the IL-12 cytokine or with EBI3/IL27B to form the IL-35 cytokine. IL-12 is primarily produced by professional antigen-presenting cells (APCs) such as B-cells and dendritic cells (DCs) as well as macrophages and granulocytes and regulates T-cell and natural killer-cell responses, induces the production of interferon-gamma (IFN-gamma), favors the differentiation of T-helper 1 (Th1) cells and is an important link between innate resistance and adaptive immunity. Mechanistically, exerts its biological effects through a receptor composed of IL12R1 and IL12R2 subunits. Binding to the receptor results in the rapid tyrosine phosphorylation of a number of cellular substrates including the JAK family kinases TYK2 and JAK2. In turn, recruited STAT4 gets phosphorylated and translocates to the nucleus where it regulates cytokine/growth factor responsive genes. As part of IL-35, plays essential roles in maintaining the immune homeostasis of the liver microenvironment and also functions as an immune-suppressive cytokine. Mediates biological events through unconventional receptors composed of IL12RB2 and gp130/IL6ST heterodimers or homodimers. Signaling requires the transcription factors STAT1 and STAT4, which form a unique heterodimer that binds to distinct DNA sites. The chain is Interleukin-12 subunit alpha (Il12a) from Mus musculus (Mouse).